A 421-amino-acid chain; its full sequence is UPF0300 protein C737.04 (421 aa).

Belongs to the UPF0300 family.

It localises to the cytoplasm. The chain is UPF0300 protein C737.04 from Schizosaccharomyces pombe (strain 972 / ATCC 24843) (Fission yeast).